A 198-amino-acid chain; its full sequence is Photosystem I assembly protein Ycf4 (198 aa).

The segment at 1–20 (MTASTTINKGDSPNGDSSAS) is disordered. 2 helical membrane passes run 36–58 (YWWASIVTLGASGFFLAGISSYL) and 78–100 (LVMGLYGTAGLLLASYLWLVILW).

It belongs to the Ycf4 family.

The protein localises to the cellular thylakoid membrane. Seems to be required for the assembly of the photosystem I complex. This Nostoc sp. (strain PCC 7120 / SAG 25.82 / UTEX 2576) protein is Photosystem I assembly protein Ycf4.